Consider the following 589-residue polypeptide: O-fucosyltransferase 11 (589 aa).

The disordered stretch occupies residues 1–37 (MKSKIHHQPNGSNNGVVSSNDNGCRSESPSPPLSPNR). Low complexity predominate over residues 10-23 (NGSNNGVVSSNDNG). A helical; Signal-anchor for type II membrane protein transmembrane segment spans residues 68–88 (MIYASGLLMCVGPFSGLVGWV). 3 N-linked (GlcNAc...) asparagine glycosylation sites follow: Asn112, Asn136, and Asn239. 332–334 (HLR) is a substrate binding site. N-linked (GlcNAc...) asparagine glycans are attached at residues Asn405, Asn406, and Asn564.

It belongs to the glycosyltransferase GT106 family.

It is found in the membrane. It functions in the pathway glycan metabolism. This is O-fucosyltransferase 11 from Arabidopsis thaliana (Mouse-ear cress).